A 265-amino-acid chain; its full sequence is Undecaprenyl-diphosphatase (265 aa).

The next 8 membrane-spanning stretches (helical) occupy residues 7-27, 45-65, 86-106, 108-128, 145-165, 186-206, 214-234, and 245-265; these read VIVS…PISS, TKIL…YFFH, LHIL…YKKI, LLFN…FLLI, ISLL…YPGF, IEFS…YDFI, ILDL…SILC, and TSLI…YFIN.

Belongs to the UppP family.

It is found in the cell membrane. The catalysed reaction is di-trans,octa-cis-undecaprenyl diphosphate + H2O = di-trans,octa-cis-undecaprenyl phosphate + phosphate + H(+). Its function is as follows. Catalyzes the dephosphorylation of undecaprenyl diphosphate (UPP). Confers resistance to bacitracin. This is Undecaprenyl-diphosphatase from Buchnera aphidicola subsp. Acyrthosiphon pisum (strain 5A).